The sequence spans 218 residues: MKEKTTATTTTTTIPTRNADDDYELIKVLMLGDYKTGKGSVLRRYHYNEFELGVSSIGVDFVIRDYGIVNGKYYKIQIWDANSCERFRSITQAYYRGAHGFMLLYDCTNQESFNNLQFWINEIINKSPNSNNSTIVIIGNKCDLVNDIKIDPIKSKLFCDSKSITSFQNVSAKDSININEPFEILFKQIIEKGHSQTISPKLIKQRYENNNNKSCNIL.

32 to 39 (GDYKTGKG) provides a ligand contact to GTP. The short motif at 54–61 (VSSIGVDF) is the Effector region element. Residues 80–84 (DANSC) and 140–143 (NKCD) contribute to the GTP site. A Cysteine methyl ester modification is found at Cys215. Cys215 carries the S-geranylgeranyl cysteine lipid modification. Positions 216 to 218 (NIL) are cleaved as a propeptide — removed in mature form.

This sequence belongs to the small GTPase superfamily. Rab family.

It localises to the cell membrane. The chain is Ras-related protein RabT2 (rabT2) from Dictyostelium discoideum (Social amoeba).